A 280-amino-acid polypeptide reads, in one-letter code: Thioredoxin-related transmembrane protein 1 (280 aa).

Residues 1 to 26 (MAPSGSLAVPLAVLVLLLWGAPWTHG) form the signal peptide. One can recognise a Thioredoxin domain in the interval 27–132 (RRSNVRVITD…FINFISDKEW (106 aa)). Over 27–180 (RRSNVRVITD…EDLGLPVWGS (154 aa)) the chain is Extracellular. Active-site nucleophile residues include C56 and C59. A disulfide bridge links C56 with C59. The chain crosses the membrane as a helical span at residues 181 to 203 (YTVFALATLFSGLLLGLCMIFVA). At 204 to 280 (DCLCPSKRRR…LGPSLATDKS (77 aa)) the chain is on the cytoplasmic side. Residues C205 and C207 are each lipidated (S-palmitoyl cysteine). The segment at 218–280 (PYPSKKLLSE…LGPSLATDKS (63 aa)) is disordered. A phosphoserine mark is found at S228, S247, S270, S274, and S280. Positions 237–252 (EEQEADEEDVSEEEAE) are enriched in acidic residues.

Interacts with ATP2A2. Palmitoylated; palmitoylation is required for localization to mitochondria-associated endoplasmic reticulum membrane (MAM). In terms of tissue distribution, ubiquitous. Highly expressed in kidney, liver, placenta and lung.

It is found in the endoplasmic reticulum membrane. Its subcellular location is the mitochondrion membrane. It localises to the secreted. The catalysed reaction is Catalyzes the rearrangement of -S-S- bonds in proteins.. Functionally, thiredoxin domain-containing protein that participates in various redox reactions through the reversible oxidation of its active center dithiol to a disulfide and catalyze dithiol-disulfide exchange reactions. Acts as a key inhibitor of the alternative triglyceride biosynthesis pathway by inhibiting the activity of TMEM68/DIESL at the endoplasmic reticulum, thereby restricting accumulation of triacylglycerol. The alternative triglyceride biosynthesis pathway mediates formation of triacylglycerol from diacylglycerol and membrane phospholipids. Acts as a protein disulfide isomerase by catalyzing formation or reduction of disulfide bonds. Specifically mediates formation of disulfide bonds of transmembrane proteins at the endoplasmic reticulum membrane. Involved in endoplasmic reticulum-associated degradation (ERAD) via its protein disulfide isomerase activity by acting on folding-defective polypeptides at the endoplasmic reticulum membrane. Acts as a negative regulator of platelet aggregation following secretion in the extracellular space. Acts as a regulator of endoplasmic reticulum-mitochondria contact sites via its ability to regulate redox signals. Regulates endoplasmic reticulum-mitochondria Ca(2+) flux. The polypeptide is Thioredoxin-related transmembrane protein 1 (Homo sapiens (Human)).